Consider the following 218-residue polypeptide: Small ribosomal subunit protein uS3c (218 aa).

One can recognise a KH type-2 domain in the interval 47 to 118; that stretch reads VQKNMRTSSG…KLNIAVTRIA (72 aa).

Belongs to the universal ribosomal protein uS3 family. In terms of assembly, part of the 30S ribosomal subunit.

It is found in the plastid. Its subcellular location is the chloroplast. This is Small ribosomal subunit protein uS3c (rps3) from Solanum bulbocastanum (Wild potato).